We begin with the raw amino-acid sequence, 378 residues long: Alcohol dehydrogenase 1 (378 aa).

Position 48 (C48) interacts with Zn(2+). An NAD(+)-binding site is contributed by 49–53 (HTDVL). Zn(2+) contacts are provided by H69, C99, C102, C105, C113, and C177. NAD(+) contacts are provided by residues 202-207 (GIGTVG), D226, K231, 274-276 (TGV), 297-299 (IGA), and 321-323 (TAF).

This sequence belongs to the zinc-containing alcohol dehydrogenase family. Class-IV subfamily. In terms of assembly, homodimer. It depends on Zn(2+) as a cofactor. In terms of tissue distribution, present in non-glandular trichome cells.

The protein resides in the nucleus. The protein localises to the cytoplasm. Its subcellular location is the cytosol. It carries out the reaction (+)-artemisinic alcohol + NAD(+) = (+)-artemisinic aldehyde + NADH + H(+). The protein operates within sesquiterpene biosynthesis. Its function is as follows. Involved in the biosynthesis of the antimalarial endoperoxide artemisinin. Catalyzes the conversion of artemisinic alcohol into artemisinic aldehyde. In Artemisia annua (Sweet wormwood), this protein is Alcohol dehydrogenase 1.